The chain runs to 194 residues: Cysteine and glycine-rich protein 3 (194 aa).

The segment at 1–5 is interaction with TCAP; sequence MPNWG. One can recognise an LIM zinc-binding 1 domain in the interval 10–61; the sequence is CGACEKTVYHAEEIQCNGRSFHKTCFHCMACRKALDSTTVAAHESEIYCKVC. Positions 64-69 match the Nuclear localization signal motif; sequence RRYGPK. The interaction with CLF2 stretch occupies residues 94–106; the sequence is QSPKQARSATTSS. A phosphoserine mark is found at Ser-95 and Ser-153. In terms of domain architecture, LIM zinc-binding 2 spans 120-171; that stretch reads CPRCGKSVYAAEKVMGGGKPWHKTCFRCAICGKSLESTNVTDKDGELYCKVC.

In terms of assembly, self-associates. Oligomeric in the cytoplasm and monomeric in the nucleus. Homooligomers preferentially form along the actin cytoskeleton. Interacts with TCAP, LDHD, MYOD1, MYOG, ACTN2, NRAP, MYF6. Interacts (via N-terminus) with GLRX3 (via C-terminus) and PPP3CA; GLRX3 and calcineurin compete for interaction with CSRP3. Interacts with CFL2; the stoichiometry influences F-actin depolymerization and possibly two molecules of CFL2 can interact with one molecule of CSRP3 resulting in the highest functional impact; the interaction is stronger with phosphorylated CFL2.

The protein resides in the nucleus. The protein localises to the cytoplasm. Its subcellular location is the cytoskeleton. It localises to the myofibril. It is found in the sarcomere. The protein resides in the z line. In terms of biological role, positive regulator of myogenesis. Acts as a cofactor for myogenic bHLH transcription factors such as MYOD1, and probably MYOG and MYF6. Enhances the DNA-binding activity of the MYOD1:TCF3 isoform E47 complex and may promote formation of a functional MYOD1:TCF3 isoform E47:MEF2A complex involved in myogenesis. Plays a crucial and specific role in the organization of cytosolic structures in cardiomyocytes. Could play a role in mechanical stretch sensing. May be a scaffold protein that promotes the assembly of interacting proteins at Z-line structures. It is essential for calcineurin anchorage to the Z line. Required for stress-induced calcineurin-NFAT activation. The role in regulation of cytoskeleton dynamics by association with CFL2 is reported conflictingly. Proposed to contribute to the maintenance of muscle cell integrity through an actin-based mechanism. Can directly bind to actin filaments, cross-link actin filaments into bundles without polarity selectivity and protect them from dilution- and cofilin-mediated depolymerization; the function seems to involve its self-association. In vitro can inhibit PKC/PRKCA activity. Proposed to be involved in cardiac stress signaling by down-regulating excessive PKC/PRKCA signaling. In Bos taurus (Bovine), this protein is Cysteine and glycine-rich protein 3 (CSRP3).